The following is a 1077-amino-acid chain: Receptor-like protein 1 (1077 aa).

Positions 1–38 are cleaved as a signal peptide; sequence MRTDERRRWWVKPKKHITLVFITITMIIQFQMKGCVSC. Positions 39 to 120 are N-cap; sequence VETERMGLLQ…SQTRSLNLSL (82 aa). Topologically, residues 39–1024 are extracellular; it reads VETERMGLLQ…NEEEGNVIDM (986 aa). N-linked (GlcNAc...) asparagine glycans are attached at residues asparagine 117, asparagine 131, and asparagine 139. LRR repeat units follow at residues 124–147, 153–176, 177–201, 202–225, 227–250, 251–274, 275–299, 300–324, 326–348, 351–376, 378–397, and 399–424; these read FPQL…FLGF, LDKL…FLNA, ATSI…ELSN, MTNL…GLTD, RDLE…SLST, AKLK…GLES, LQEL…VLKD, LKML…GLEI, TSLQ…YLGI, LMKL…NLTH, RTLD…FVSG, and PSVL…LVNQ. N-linked (GlcNAc...) asparagine glycosylation is present at asparagine 201. N-linked (GlcNAc...) asparagine glycosylation is present at asparagine 240. A glycan (N-linked (GlcNAc...) asparagine) is linked at asparagine 289. Residues asparagine 373, asparagine 390, and asparagine 423 are each glycosylated (N-linked (GlcNAc...) asparagine). The LRR 13; degenerate repeat unit spans residues 425-449; it reads TRLTVFKLSSKVGVIQVQTESSWAP. LRR repeat units lie at residues 450 to 473, 474 to 498, 499 to 522, 524 to 545, 546 to 570, 572 to 594, 595 to 621, 623 to 643, 644 to 666, 667 to 694, 696 to 713, 714 to 737, 739 to 761, 762 to 785, 786 to 808, 877 to 901, 902 to 925, 927 to 949, and 951 to 970; these read LFQL…FLVH, QRDL…LVKN, NTRL…ILVH, LQVL…IGMV, FPNL…IGEM, SLQV…FLSG, CYSL…NLTG, VGLF…LLKS, KNLT…WIGR, ISRL…PWVE, MDIS…NVNF, PSLR…LFKA, GLEV…IDQT, SKLR…ICQL, SEVG…CFSK, LRYM…IGDL, QNIR…ISKL, GLES…LADL, and SLGY…PFKG. 2 N-linked (GlcNAc...) asparagine glycosylation sites follow: asparagine 460 and asparagine 498. N-linked (GlcNAc...) asparagine glycosylation occurs at asparagine 553. N-linked (GlcNAc...) asparagine glycosylation is found at asparagine 618, asparagine 631, and asparagine 645. 2 N-linked (GlcNAc...) asparagine glycosylation sites follow: asparagine 749 and asparagine 771. An N-linked (GlcNAc...) asparagine glycan is attached at asparagine 908. Asparagine 956 and asparagine 961 each carry an N-linked (GlcNAc...) asparagine glycan. Residues 971-1024 form a C-cap/acidic domain region; the sequence is HLVTFDERSYIGNAHLCGLPTNKNCISQRVPEPPSVSTHAKEEENEEEGNVIDM. Residues 1025–1045 traverse the membrane as a helical segment; the sequence is VWFYWTCAAVYISTSLALFAF. The Cytoplasmic portion of the chain corresponds to 1046-1077; sequence LYIDSRWSREWFYRVDLCVHHILQFKRSSVCN.

Belongs to the RLP family.

Its subcellular location is the cell membrane. In terms of biological role, involved in plant defense. Confers resistance to the bacterial pathogen Xanthomonas through recognition of the microbe-associated molecular pattern (MAMP) eMax. Functionality seems to depend on the presence of the receptor kinase SOBIR1 as an adapter protein. The protein is Receptor-like protein 1 of Arabidopsis thaliana (Mouse-ear cress).